Consider the following 442-residue polypeptide: Adenylosuccinate synthetase (442 aa).

GTP-binding positions include G25–K31, G53–T55, and K62. Residue D26 is the Proton acceptor of the active site. The Mg(2+) site is built by D26 and G53. IMP-binding positions include D26 to K29 and N51 to H54. The active-site Proton donor is H54. IMP contacts are provided by T141, R155, N232, and T247. GTP is bound at residue T307. T307–R313 serves as a coordination point for substrate. R311 serves as a coordination point for IMP. Residues R313, K339–D341, and G425–G427 each bind GTP.

Belongs to the adenylosuccinate synthetase family. In terms of assembly, homodimer. It depends on Mg(2+) as a cofactor.

Its subcellular location is the cytoplasm. The enzyme catalyses IMP + L-aspartate + GTP = N(6)-(1,2-dicarboxyethyl)-AMP + GDP + phosphate + 2 H(+). The protein operates within purine metabolism; AMP biosynthesis via de novo pathway; AMP from IMP: step 1/2. With respect to regulation, inhibited by hadacidin. Activated by fructose 1,6-bisphosphate. In terms of biological role, plays an important role in the salvage pathway for purine nucleotide biosynthesis. Catalyzes the first committed step in the biosynthesis of AMP from IMP. The sequence is that of Adenylosuccinate synthetase (Adss) from Plasmodium falciparum.